The primary structure comprises 355 residues: 3-dehydroquinate synthase (355 aa).

Residues 71-76 (EGEASK), 105-109 (GVVGD), 129-130 (TS), Lys142, and Lys151 each bind NAD(+). Residues Glu184, His246, and His263 each coordinate Zn(2+).

Belongs to the sugar phosphate cyclases superfamily. Dehydroquinate synthase family. Co(2+) is required as a cofactor. It depends on Zn(2+) as a cofactor. NAD(+) serves as cofactor.

It is found in the cytoplasm. It carries out the reaction 7-phospho-2-dehydro-3-deoxy-D-arabino-heptonate = 3-dehydroquinate + phosphate. The protein operates within metabolic intermediate biosynthesis; chorismate biosynthesis; chorismate from D-erythrose 4-phosphate and phosphoenolpyruvate: step 2/7. Catalyzes the conversion of 3-deoxy-D-arabino-heptulosonate 7-phosphate (DAHP) to dehydroquinate (DHQ). This Streptococcus thermophilus (strain ATCC BAA-491 / LMD-9) protein is 3-dehydroquinate synthase.